Reading from the N-terminus, the 308-residue chain is MVWIWLGVGLLGGTGLASLVLAISLFTQRRGRKRSDETSSRGRLPAAASDKRGACACCYRNPKEDVVEPLDLELGLMRVATHPPTPQVPRCTSLYIGEDGLPIDKPEFPPARFEIPDVSTPGTPTSIDRSPSHCSSLSSLSSSTSVDTVLHQPPPSWKPPPPPGRKKRPPTPPVRAPTTRLSSHRPPTPIPAPRKNLSTPPTKKTPPPTKPKPVGWTPPVTPRPFPKTPTPQKPPRNPRLPRTVGLENLSKVGLSCPCPRPRTPTEPTTLPIVSVSELAPPPRWSDIEELLEQAVQSVMKDAESMQMT.

A signal peptide spans 1–22; the sequence is MVWIWLGVGLLGGTGLASLVLA. Positions 103 to 274 are disordered; sequence IDKPEFPPAR…TEPTTLPIVS (172 aa). The segment covering 120–129 has biased composition (polar residues); it reads TPGTPTSIDR. Residues 132 to 145 are compositionally biased toward low complexity; sequence SHCSSLSSLSSSTS. Pro residues-rich tracts occupy residues 152–163 and 219–238; these read QPPPSWKPPPPP and PVTP…PRNP.

The protein belongs to the HCMV UL135 family. Interacts with host components of the WAVE2 complex ABI1, NAP1 and WAVE2. Also interacts with host ABI2 and TLN1.

It localises to the host cell membrane. Its subcellular location is the host Golgi apparatus. Remodels the host actin cytoskeleton in order to impair immune recognition of infected cells. Mechanistically, interacts with members of the host WAVE2 complex and redirects the complex to the plasma membrane. In turn, the efficiency of immune synapse formation is greatly reduced. The protein is Protein UL135 (UL135) of Homo sapiens (Human).